Consider the following 84-residue polypeptide: U-actitoxin-Avd8e (84 aa).

An N-terminal signal peptide occupies residues 1-22; the sequence is MASARTLVLLLIGAVLMCQVSA. Positions 23–41 are excised as a propeptide; sequence DSELLNEILAAHMEEDMPE. The ShKT domain maps to 44–84; it reads CIDRYRSNICGSVIRPLDCTRRKSRMGRFARTNCKKLCGFC. Disulfide bonds link Cys44-Cys84, Cys53-Cys77, and Cys62-Cys81.

This sequence belongs to the sea anemone 8 toxin family.

The protein localises to the secreted. It localises to the nematocyst. This is U-actitoxin-Avd8e from Anemonia viridis (Snakelocks anemone).